Reading from the N-terminus, the 538-residue chain is Carotenoid 9,10(9',10')-cleavage dioxygenase 1 (538 aa).

Fe cation-binding residues include His-222, His-270, His-336, and His-523.

It belongs to the carotenoid oxygenase family. Homodimer. Fe(2+) serves as cofactor. As to expression, high expression in flowers and siliques. Also detected in stems, leaves and roots.

It is found in the cytoplasm. The enzyme catalyses all-trans-zeaxanthin + 2 O2 = 4,9-dimethyldodeca-2,4,6,8,10-pentaenedial + 2 (3R)-hydroxy-beta-ionone. Cleaves a variety of carotenoids symmetrically at both the 9-10 and 9'-10' double bonds. Active on beta,beta-carotene, lutein, zeaxanthin, all-trans-violaxanthin, 9-cis-violaxanthin and 9'-cis-neoxanthin. With most substrates, the carotenoid is symmetrically cleaved. Probably not involved in abscisic acid biosynthesis. In Arabidopsis thaliana (Mouse-ear cress), this protein is Carotenoid 9,10(9',10')-cleavage dioxygenase 1 (CCD1).